The sequence spans 772 residues: Ion-translocating oxidoreductase complex subunit C (772 aa).

4Fe-4S ferredoxin-type domains follow at residues 369–397 (GEPQ…QQLY) and 407–436 (KATT…VQYF). 8 residues coordinate [4Fe-4S] cluster: cysteine 377, cysteine 380, cysteine 383, cysteine 387, cysteine 416, cysteine 419, cysteine 422, and cysteine 426. 3 disordered regions span residues 602 to 684 (KLEQ…DPRK), 696 to 717 (ARKL…PRKA), and 727 to 746 (KARK…QVDP). The segment covering 605–615 (QQQANAEPEQQ) has biased composition (low complexity).

This sequence belongs to the 4Fe4S bacterial-type ferredoxin family. RnfC subfamily. The complex is composed of six subunits: RsxA, RsxB, RsxC, RsxD, RsxE and RsxG. The cofactor is [4Fe-4S] cluster.

Its subcellular location is the cell inner membrane. Its function is as follows. Part of a membrane-bound complex that couples electron transfer with translocation of ions across the membrane. Required to maintain the reduced state of SoxR. The protein is Ion-translocating oxidoreductase complex subunit C of Escherichia coli O157:H7 (strain EC4115 / EHEC).